We begin with the raw amino-acid sequence, 860 residues long: DNA mismatch repair protein MutS (860 aa).

Residue 621–628 (GPNMGGKS) participates in ATP binding.

This sequence belongs to the DNA mismatch repair MutS family.

In terms of biological role, this protein is involved in the repair of mismatches in DNA. It is possible that it carries out the mismatch recognition step. This protein has a weak ATPase activity. In Salmonella arizonae (strain ATCC BAA-731 / CDC346-86 / RSK2980), this protein is DNA mismatch repair protein MutS.